Consider the following 310-residue polypeptide: MTLSDDPISPSTQESSNSSYVRSKEAEKNSPSQETDEEVLKGYESYRENPSNYDNDNILIYTDTFNLYDDMFEGSLDSTRNFGAQKDPNVLVMQRLLHNSGSLIGVDMEQDGIDLATLFADSTEDSKLPYVIYEGLEMQGEGYGTNTRGPFENKIDIGSFGKSGSVMNVEREKEKIVMIPTPRFGNATPQWTIKKKLSSYDIRPRCGRLILQSSSFNEHIGRHLPKDQMIKINVGVNVNVYDYDTGTLHELRLEYQRQYGLAHGWQEDFVRRRHLKQKDEIGLLWDFSSSRLQFGVISRNTGPGLWETKD.

Polar residues predominate over residues 1–21; that stretch reads MTLSDDPISPSTQESSNSSYV. Residues 1-39 form a disordered region; it reads MTLSDDPISPSTQESSNSSYVRSKEAEKNSPSQETDEEV. Residues 205–300 constitute a DNA-binding region (TF-B3); sequence RCGRLILQSS…RLQFGVISRN (96 aa).

It localises to the nucleus. The protein is B3 domain-containing protein At4g02870 (ARF42) of Arabidopsis thaliana (Mouse-ear cress).